A 423-amino-acid chain; its full sequence is UPF0229 protein VP0986 (423 aa).

Residues 69-112 (GGVRERVHPGNDQFITGDKIERPKGGGQGSGSGEGNASPDGEGQ) are disordered. Over residues 93-102 (GGGQGSGSGE) the composition is skewed to gly residues.

This sequence belongs to the UPF0229 family.

The sequence is that of UPF0229 protein VP0986 from Vibrio parahaemolyticus serotype O3:K6 (strain RIMD 2210633).